Reading from the N-terminus, the 130-residue chain is Large ribosomal subunit protein bL12 (130 aa).

This sequence belongs to the bacterial ribosomal protein bL12 family. As to quaternary structure, homodimer. Part of the ribosomal stalk of the 50S ribosomal subunit. Forms a multimeric L10(L12)X complex, where L10 forms an elongated spine to which 2 to 4 L12 dimers bind in a sequential fashion. Binds GTP-bound translation factors.

Functionally, forms part of the ribosomal stalk which helps the ribosome interact with GTP-bound translation factors. Is thus essential for accurate translation. This chain is Large ribosomal subunit protein bL12, found in Mycobacterium bovis (strain ATCC BAA-935 / AF2122/97).